The chain runs to 657 residues: MKSFKNKNTLRRKKAFPVFTKILLVSFLVWVLKCSNNCNNGNGSGDSFDFRNKRTLAQKQHEHHHHHHHHHHHQHQAPHQAPHQAHHHHHHGEVNHQAPQVHQQVHGQDQAHHHHHHHHHHLHPQQPQGTVANPPSNEPVVKTQVFREARPGGGFKAYEEKYESKHYKLKENVVDGKKDCDEKYEAANYAFSEECPYTVNDYSQENGPNIFALRKRFPLGMNDEDEEGKEALAIKDKLPGGLDEYQNQLYGICNETCTTCGPAAIDYVPADAPNGYAYGGSAHDGSHGNLRGHDNKGSEGYGYEAPYNPGFNGAPGSNGMQNYVHPWSGYSAPYGVPHGAAHGSRYSSFSSVNKYGKHGDEKHHSSKKHEGNDGEGEKKKKSKKHKDHDGEKKKSKKHKDNEDAESVKSKKHKSHDCEKKKSKKHKDNEDAESVKSKKVLKKREKSIMEKNHAAKKLTKKIKIKKKTNNSKSDGSKAHEKKENETKNTAGENKKVDSTSADNKSTNAATPGAKDKTQGGKTDKTGASTNAATNKGQCAAEGATKGATKEASTSKEATKEASTSKEATKEASTSKEATKEASTSKGATKEASTTEGATKGASTTAGSTTGATTGANAVQSKDETADKNAANNGEQVMSRGQAQLQEAGKKKKKRGCCG.

The signal sequence occupies residues 1–34; it reads MKSFKNKNTLRRKKAFPVFTKILLVSFLVWVLKC. N-linked (GlcNAc...) asparagine glycosylation is present at N42. Basic residues predominate over residues 57–76; it reads AQKQHEHHHHHHHHHHHQHQ. Disordered stretches follow at residues 57–138, 282–301, and 352–657; these read AQKQ…PSNE, AHDGSHGNLRGHDNKGSEGY, and VNKY…GCCG. Low complexity predominate over residues 99–108; that stretch reads PQVHQQVHGQ. Positions 112–123 are enriched in basic residues; that stretch reads HHHHHHHHHHLH. Composition is skewed to basic and acidic residues over residues 357–378 and 399–408; these read KHGDEKHHSSKKHEGNDGEGEK and KDNEDAESVK. Residues 409 to 425 are compositionally biased toward basic residues; the sequence is SKKHKSHDCEKKKSKKH. Over residues 426-435 the composition is skewed to basic and acidic residues; it reads KDNEDAESVK. Over residues 453-468 the composition is skewed to basic residues; that stretch reads AAKKLTKKIKIKKKTN. Basic and acidic residues predominate over residues 473-496; the sequence is DGSKAHEKKENETKNTAGENKKVD. Polar residues predominate over residues 497–508; it reads STSADNKSTNAA. Composition is skewed to basic and acidic residues over residues 512-523 and 551-578; these read AKDKTQGGKTDK and STSKEATKEASTSKEATKEASTSKEATK. Residues 590 to 614 show a composition bias toward low complexity; it reads ASTTEGATKGASTTAGSTTGATTGA. Residues 628–643 show a composition bias toward polar residues; it reads AANNGEQVMSRGQAQL. Residues 648–657 are compositionally biased toward basic residues; sequence KKKKKRGCCG.

Its subcellular location is the secreted. In terms of biological role, KAHRP might mimick human histidine-rich glycoproteins to anchor host thrombospondin or a parasite analog in a binding complex with the endothelial cell receptor. The polypeptide is Knob-associated histidine-rich protein (SD17) (Plasmodium falciparum (isolate NF7 / Ghana)).